The following is a 365-amino-acid chain: Putrescine 2-hydroxylase (365 aa).

The Rieske domain occupies 44-141; sequence GHELMVPEVG…LQNWNGLLFE (98 aa). 4 residues coordinate [2Fe-2S] cluster: Cys-81, His-83, Cys-100, and His-103.

It belongs to the bacterial ring-hydroxylating dioxygenase alpha subunit family. Requires [2Fe-2S] cluster as cofactor.

In terms of biological role, rieske-type iron sulfur protein that can catalyze in vitro the 2-hydroxylation of putrescine, forming 2-hydroxyputrescine. May be involved in the biosynthesis of the cyclic hydroxamate siderophore alcaligin. The chain is Putrescine 2-hydroxylase from Ralstonia nicotianae (strain ATCC BAA-1114 / GMI1000) (Ralstonia solanacearum).